The primary structure comprises 230 residues: DNA mismatch repair protein MutH (230 aa).

This sequence belongs to the MutH family.

Its subcellular location is the cytoplasm. In terms of biological role, sequence-specific endonuclease that cleaves unmethylated GATC sequences. It is involved in DNA mismatch repair. The protein is DNA mismatch repair protein MutH of Citrobacter koseri (strain ATCC BAA-895 / CDC 4225-83 / SGSC4696).